The primary structure comprises 567 residues: TGF-beta receptor type-2 (567 aa).

Positions 1–22 (MGRGLLRGLWPLHIVLWTRIAS) are cleaved as a signal peptide. Residues 23–166 (TIPPHVQKSV…NPDLLLVIFQ (144 aa)) lie on the Extracellular side of the membrane. 6 disulfides stabilise this stretch: Cys-51/Cys-84, Cys-54/Cys-71, Cys-61/Cys-67, Cys-77/Cys-101, Cys-121/Cys-136, and Cys-138/Cys-143. Asn-70 and Asn-94 each carry an N-linked (GlcNAc...) asparagine glycan. A glycan (N-linked (GlcNAc...) asparagine) is linked at Asn-154. Residues 167 to 187 (VTGISLLPPLGVAISVIIIFY) form a helical membrane-spanning segment. At 188–567 (CYRVNRQQKL…PEDGSLNTTK (380 aa)) the chain is on the cytoplasmic side. The 301-residue stretch at 244–544 (IELDTLVGKG…AERFSELEHL (301 aa)) folds into the Protein kinase domain. ATP-binding positions include 250–258 (VGKGRFAEV) and Lys-277. The active-site Proton acceptor is the Asp-379. Phosphoserine is present on residues Ser-409, Ser-548, and Ser-553. The tract at residues 439 to 567 (VESFKQTDVY…PEDGSLNTTK (129 aa)) is sufficient for interaction with CLU.

It belongs to the protein kinase superfamily. TKL Ser/Thr protein kinase family. TGFB receptor subfamily. In terms of assembly, homodimer. Heterohexamer; TGFB1, TGFB2 and TGFB3 homodimeric ligands assemble a functional receptor composed of two TGFBR1 and TGFBR2 heterodimers to form a ligand-receptor heterohexamer. The respective affinity of TGFRB1 and TGFRB2 for the ligands may modulate the kinetics of assembly of the receptor and may explain the different biological activities of TGFB1, TGFB2 and TGFB3. Component of a complex composed of TSC22D1 (via N-terminus), TGFBR1 and TGFBR2; the interaction between TSC22D1 and TGFBR1 is inhibited by SMAD7 and promoted by TGFB1. Interacts with DAXX. Interacts with DYNLT4. Interacts with ZFYVE9; ZFYVE9 recruits SMAD2 and SMAD3 to the TGF-beta receptor. Interacts with and is activated by SCUBE3; this interaction does not affect TGFB1-binding to TGFBR2. Interacts with VPS39; this interaction is independent of the receptor kinase activity and of the presence of TGF-beta. Interacts with CLU. As to quaternary structure, homodimer; disulfide-linked. It depends on Mg(2+) as a cofactor. Mn(2+) is required as a cofactor. Phosphorylated on a Ser/Thr residue in the cytoplasmic domain.

It is found in the cell membrane. The protein resides in the membrane raft. Its subcellular location is the secreted. It catalyses the reaction L-threonyl-[receptor-protein] + ATP = O-phospho-L-threonyl-[receptor-protein] + ADP + H(+). The enzyme catalyses L-seryl-[receptor-protein] + ATP = O-phospho-L-seryl-[receptor-protein] + ADP + H(+). In terms of biological role, transmembrane serine/threonine kinase forming with the TGF-beta type I serine/threonine kinase receptor, TGFBR1, the non-promiscuous receptor for the TGF-beta cytokines TGFB1, TGFB2 and TGFB3. Transduces the TGFB1, TGFB2 and TGFB3 signal from the cell surface to the cytoplasm and thus regulates a plethora of physiological and pathological processes including cell cycle arrest in epithelial and hematopoietic cells, control of mesenchymal cell proliferation and differentiation, wound healing, extracellular matrix production, immunosuppression and carcinogenesis. The formation of the receptor complex composed of 2 TGFBR1 and 2 TGFBR2 molecules symmetrically bound to the cytokine dimer results in the phosphorylation and activation of TGFBR1 by the constitutively active TGFBR2. Activated TGFBR1 phosphorylates SMAD2 which dissociates from the receptor and interacts with SMAD4. The SMAD2-SMAD4 complex is subsequently translocated to the nucleus where it modulates the transcription of the TGF-beta-regulated genes. This constitutes the canonical SMAD-dependent TGF-beta signaling cascade. Also involved in non-canonical, SMAD-independent TGF-beta signaling pathways. Has transforming growth factor beta-activated receptor activity. Its function is as follows. Binds TGFB1, TGFB2 and TGFB3 in the picomolar affinity range without the participation of additional receptors. Blocks activation of SMAD2 and SMAD3 by TGFB1. The chain is TGF-beta receptor type-2 (TGFBR2) from Homo sapiens (Human).